Here is a 285-residue protein sequence, read N- to C-terminus: uncharacterized protein (285 aa).

Residues 107–285 (FLTVDTTIFD…KHHLKRQMIP (179 aa)) enclose the ATP-grasp domain.

This is an uncharacterized protein from Mycoplasma pneumoniae (strain ATCC 29342 / M129 / Subtype 1) (Mycoplasmoides pneumoniae).